A 237-amino-acid chain; its full sequence is Uridylate kinase (237 aa).

Position 12–15 (12–15 (KISG)) interacts with ATP. Gly54 serves as a coordination point for UMP. Residues Gly55 and Arg59 each coordinate ATP. Residues Asp72 and 133-140 (TGNPFFST) contribute to the UMP site. ATP-binding residues include Tyr166 and Asp169.

It belongs to the UMP kinase family. Homohexamer.

It is found in the cytoplasm. The catalysed reaction is UMP + ATP = UDP + ADP. It functions in the pathway pyrimidine metabolism; CTP biosynthesis via de novo pathway; UDP from UMP (UMPK route): step 1/1. Inhibited by UTP. Catalyzes the reversible phosphorylation of UMP to UDP. This chain is Uridylate kinase, found in Caldanaerobacter subterraneus subsp. tengcongensis (strain DSM 15242 / JCM 11007 / NBRC 100824 / MB4) (Thermoanaerobacter tengcongensis).